Here is a 474-residue protein sequence, read N- to C-terminus: Proline--tRNA ligase (474 aa).

The protein belongs to the class-II aminoacyl-tRNA synthetase family. ProS type 3 subfamily. Homodimer.

It is found in the cytoplasm. The catalysed reaction is tRNA(Pro) + L-proline + ATP = L-prolyl-tRNA(Pro) + AMP + diphosphate. Functionally, catalyzes the attachment of proline to tRNA(Pro) in a two-step reaction: proline is first activated by ATP to form Pro-AMP and then transferred to the acceptor end of tRNA(Pro). The sequence is that of Proline--tRNA ligase from Mycoplasma capricolum subsp. capricolum (strain California kid / ATCC 27343 / NCTC 10154).